The primary structure comprises 421 residues: CinA-like protein (421 aa).

It belongs to the CinA family.

The chain is CinA-like protein from Mycobacterium sp. (strain JLS).